The sequence spans 152 residues: Ribosomal RNA large subunit methyltransferase H (152 aa).

S-adenosyl-L-methionine is bound by residues leucine 71, glycine 101, and 120–125 (LSKLTF).

This sequence belongs to the RNA methyltransferase RlmH family. Homodimer.

The protein localises to the cytoplasm. It catalyses the reaction pseudouridine(1915) in 23S rRNA + S-adenosyl-L-methionine = N(3)-methylpseudouridine(1915) in 23S rRNA + S-adenosyl-L-homocysteine + H(+). Its function is as follows. Specifically methylates the pseudouridine at position 1915 (m3Psi1915) in 23S rRNA. The chain is Ribosomal RNA large subunit methyltransferase H from Thermosipho melanesiensis (strain DSM 12029 / CIP 104789 / BI429).